We begin with the raw amino-acid sequence, 258 residues long: Isoprenyl transferase (258 aa).

D38 is a catalytic residue. D38 provides a ligand contact to Mg(2+). Substrate contacts are provided by residues 39–42, W43, R51, H55, and 83–85; these read GNGR and STE. Catalysis depends on N86, which acts as the Proton acceptor. Residues W87, R89, R206, and 212–214 each bind substrate; that span reads RIS. E225 contacts Mg(2+).

Belongs to the UPP synthase family. Homodimer. Mg(2+) is required as a cofactor.

Functionally, catalyzes the condensation of isopentenyl diphosphate (IPP) with allylic pyrophosphates generating different type of terpenoids. The protein is Isoprenyl transferase of Bacillus thuringiensis subsp. konkukian (strain 97-27).